The following is a 155-amino-acid chain: Small ribosomal subunit protein uS7cz/uS7cy (155 aa).

This sequence belongs to the universal ribosomal protein uS7 family. Part of the 30S ribosomal subunit.

It localises to the plastid. The protein resides in the chloroplast. In terms of biological role, one of the primary rRNA binding proteins, it binds directly to 16S rRNA where it nucleates assembly of the head domain of the 30S subunit. This is Small ribosomal subunit protein uS7cz/uS7cy (rps7-A) from Phaseolus vulgaris (Kidney bean).